The primary structure comprises 650 residues: uncharacterized protein (650 aa).

Belongs to the MG032/MG096/MG288 family.

This is an uncharacterized protein from Mycoplasma genitalium (strain ATCC 33530 / DSM 19775 / NCTC 10195 / G37) (Mycoplasmoides genitalium).